Consider the following 210-residue polypeptide: Glycerol-3-phosphate acyltransferase 2 (210 aa).

6 helical membrane-spanning segments follow: residues 4-24 (LIMVIIALIAAYFIGSTPAPY), 52-72 (VGFWPGILVLTTDIGKGALAM), 73-93 (AVANWLGEGLGIQMLCALMAI), 114-134 (IGILAYMMPEGIPIYIACFLI), 141-161 (FPTLSYGISFISFILVAWLGQ), and 163-183 (DMGKVLFSLLVVMIPILMYIP).

It belongs to the PlsY family. Probably interacts with PlsX.

It is found in the cell membrane. It carries out the reaction an acyl phosphate + sn-glycerol 3-phosphate = a 1-acyl-sn-glycero-3-phosphate + phosphate. The protein operates within lipid metabolism; phospholipid metabolism. Functionally, catalyzes the transfer of an acyl group from acyl-phosphate (acyl-PO(4)) to glycerol-3-phosphate (G3P) to form lysophosphatidic acid (LPA). This enzyme utilizes acyl-phosphate as fatty acyl donor, but not acyl-CoA or acyl-ACP. This Dehalococcoides mccartyi (strain CBDB1) protein is Glycerol-3-phosphate acyltransferase 2.